Consider the following 225-residue polypeptide: UPF0758 protein BCG9842_B0662 (225 aa).

The region spanning 103–225 (SIRSPEDCAK…FVSLKEKGHI (123 aa)) is the MPN domain. His-174, His-176, and Asp-187 together coordinate Zn(2+). Residues 174 to 187 (HNHPSGDPTPSRED) carry the JAMM motif motif.

Belongs to the UPF0758 family.

This Bacillus cereus (strain G9842) protein is UPF0758 protein BCG9842_B0662.